Consider the following 838-residue polypeptide: G-protein coupled receptor-associated sorting protein 2 (838 aa).

4 disordered regions span residues 1 to 122, 218 to 292, 349 to 368, and 531 to 552; these read MTGA…GARP, ASNE…SNPF, RFRHRDKEDPNTALKLRAQK, and LELSPEGEEQESLLQPDQPSPE. The segment covering 13 to 31 has biased composition (basic and acidic residues); that stretch reads KPEKKAGEEVIAGPEREND. Polar residues predominate over residues 220 to 245; that stretch reads NESGFWSADETSTASSFWTGEETSVR. A compositionally biased stretch (basic residues) spans 255 to 271; the sequence is RSRHRAKHQTNPRSRPR. 2 positions are modified to phosphoserine: Ser282 and Ser284. Over residues 542 to 552 the composition is skewed to polar residues; it reads SLLQPDQPSPE.

It belongs to the GPRASP family. Interacts with cytoplasmic tails of a variety of G-protein coupled receptors such as muscarinic acetylcholine receptor M1/CHRM1 and calcitonin receptor/CALCR. Expressed in the brain.

In terms of biological role, may play a role in regulation of a variety of G-protein coupled receptors. The protein is G-protein coupled receptor-associated sorting protein 2 (GPRASP2) of Homo sapiens (Human).